We begin with the raw amino-acid sequence, 143 residues long: Interleukin-3 (143 aa).

The N-terminal stretch at 1–19 is a signal peptide; that stretch reads MSRLPVLLLLHLLVSPGLQ. Cys-35 and Cys-103 are joined by a disulfide. Residue Asn-89 is glycosylated (N-linked (GlcNAc...) asparagine).

Belongs to the IL-3 family. In terms of assembly, monomer. Activated T-cells, mast cells, natural killer cells.

It localises to the secreted. Its function is as follows. Granulocyte/macrophage colony-stimulating factors are cytokines that act in hematopoiesis by controlling the production, differentiation, and function of 2 related white cell populations of the blood, the granulocytes and the monocytes-macrophages. In terms of biological role, this CSF induces granulocytes, macrophages, mast cells, stem cells, erythroid cells, eosinophils and megakaryocytes. The polypeptide is Interleukin-3 (IL3) (Macaca mulatta (Rhesus macaque)).